We begin with the raw amino-acid sequence, 339 residues long: 3-isopropylmalate dehydrogenase (339 aa).

Substrate is bound by residues Arg88, Arg98, Arg122, and Asp212. Mg(2+)-binding residues include Asp212, Asp236, and Asp240. Residue 272–284 (GSAPDIAGQGIAD) participates in NAD(+) binding.

Belongs to the isocitrate and isopropylmalate dehydrogenases family. LeuB type 2 subfamily. Homodimer. Requires Mg(2+) as cofactor. Mn(2+) serves as cofactor.

Its subcellular location is the cytoplasm. The enzyme catalyses (2R,3S)-3-isopropylmalate + NAD(+) = 4-methyl-2-oxopentanoate + CO2 + NADH. Its pathway is amino-acid biosynthesis; L-leucine biosynthesis; L-leucine from 3-methyl-2-oxobutanoate: step 3/4. Its function is as follows. Catalyzes the oxidation of 3-carboxy-2-hydroxy-4-methylpentanoate (3-isopropylmalate) to 3-carboxy-4-methyl-2-oxopentanoate. The product decarboxylates to 4-methyl-2 oxopentanoate. This chain is 3-isopropylmalate dehydrogenase, found in Corynebacterium urealyticum (strain ATCC 43042 / DSM 7109).